Reading from the N-terminus, the 156-residue chain is Small ribosomal subunit protein uS7 (156 aa).

The protein belongs to the universal ribosomal protein uS7 family. In terms of assembly, part of the 30S ribosomal subunit. Contacts proteins S9 and S11.

One of the primary rRNA binding proteins, it binds directly to 16S rRNA where it nucleates assembly of the head domain of the 30S subunit. Is located at the subunit interface close to the decoding center, probably blocks exit of the E-site tRNA. This Psychromonas ingrahamii (strain DSM 17664 / CCUG 51855 / 37) protein is Small ribosomal subunit protein uS7.